An 810-amino-acid polypeptide reads, in one-letter code: Phospholipase D alpha 1 (810 aa).

Residues methionine 1–valine 126 form the C2 domain. Aspartate 187 lines the Ca(2+) pocket. Positions threonine 327–arginine 366 constitute a PLD phosphodiesterase 1 domain. Residues histidine 332, lysine 334, and aspartate 339 contribute to the active site. Histidine 332 is a binding site for a 1,2-diacyl-sn-glycero-3-phosphate. The Ca(2+) site is built by histidine 372 and histidine 406. Residues glutamine 522 and histidine 661 each coordinate a 1,2-diacyl-sn-glycero-3-phosphate. Residues phenylalanine 656–serine 683 enclose the PLD phosphodiesterase 2 domain. Residues histidine 661, lysine 663, and aspartate 668 contribute to the active site. Glutamate 722 serves as a coordination point for Ca(2+).

It belongs to the phospholipase D family. C2-PLD subfamily. As to quaternary structure, interacts with GPA1. This binding inhibits PLDALPHA1 activity and is relieved by GTP. Ca(2+) serves as cofactor. Highly expressed in roots, stems and flowers, moderately in leaves, seedlings and siliques. Not detected in seeds.

The protein localises to the cytoplasm. Its subcellular location is the cell membrane. It is found in the mitochondrion membrane. The protein resides in the microsome membrane. It localises to the vacuole. The protein localises to the cytoplasmic vesicle. Its subcellular location is the clathrin-coated vesicle. It catalyses the reaction a 1,2-diacyl-sn-glycero-3-phosphocholine + H2O = a 1,2-diacyl-sn-glycero-3-phosphate + choline + H(+). With respect to regulation, not inhibited by neomycin. In terms of biological role, hydrolyzes glycerol-phospholipids at the terminal phosphodiesteric bond to generate phosphatidic acids (PA). Plays an important role in various cellular processes, including phytohormone action and response to stress, characterized by acidification of the cell. Involved in wound induction of jasmonic acid. May be involved in membrane lipid remodeling. Probably involved in freezing tolerance by modulating the cold-responsive genes and accumulation of osmolytes. Can use phosphatidylcholine (PC), phosphatidylethanolamine (PE) and phosphatidylglycerol (PG) as substrates, both in presence or in absence of PIP2. Its main substrate is phosphatidylcholine. Stimulates the intrinsic GTPase activity of GPA1 upon binding. Mediates the abscisic acid effects on stomata through interaction with GPA1 and the production of phosphatidic acid that bind to ABI1. Involved in seed aging and deterioration. Involved in microtubule stabilization and salt tolerance. Involved in abscisic acid-induced stomatal closure. This Arabidopsis thaliana (Mouse-ear cress) protein is Phospholipase D alpha 1.